The following is a 430-amino-acid chain: Enolase (430 aa).

A (2R)-2-phosphoglycerate-binding site is contributed by Q163. The Proton donor role is filled by E205. Mg(2+)-binding residues include D242, E288, and D315. (2R)-2-phosphoglycerate is bound by residues K340, R369, S370, and K391. K340 functions as the Proton acceptor in the catalytic mechanism.

The protein belongs to the enolase family. Requires Mg(2+) as cofactor.

It is found in the cytoplasm. It localises to the secreted. Its subcellular location is the cell surface. The enzyme catalyses (2R)-2-phosphoglycerate = phosphoenolpyruvate + H2O. The protein operates within carbohydrate degradation; glycolysis; pyruvate from D-glyceraldehyde 3-phosphate: step 4/5. Its function is as follows. Catalyzes the reversible conversion of 2-phosphoglycerate (2-PG) into phosphoenolpyruvate (PEP). It is essential for the degradation of carbohydrates via glycolysis. The polypeptide is Enolase (Aster yellows witches'-broom phytoplasma (strain AYWB)).